The sequence spans 431 residues: Protein translocase subunit SecY (431 aa).

Over 1–17 (MFKTISNFMRVSDIRNK) the chain is Cytoplasmic. A helical transmembrane segment spans residues 18–38 (IIFTLLMLIVFRIGAFIPVPY). Residues 39 to 66 (VNAEALQAQSQMGVFDLLNTFGGGALYQ) are Extracellular-facing. Residues 67–87 (FSIFAMGITPYITASIIIQLL) traverse the membrane as a helical segment. The Cytoplasmic segment spans residues 88-115 (QMDVVPKFTEWSKQGEVGRRKLAQFTRY). Residues 116 to 136 (FTIVLGFIQALGMSYGFNNLA) form a helical membrane-spanning segment. At 137 to 145 (NGMLIEKSG) the chain is on the extracellular side. The chain crosses the membrane as a helical span at residues 146 to 166 (VSTYLIIALVLTGGTAFLMWL). Residues 167–177 (GEQITSHGVGN) are Cytoplasmic-facing. Residues 178–198 (GISIIIFAGIVSSIPKTIGQI) traverse the membrane as a helical segment. At 199 to 213 (YETQFVGSNDQLFIH) the chain is on the extracellular side. Residues 214–234 (IVKVALLVIAILAVIVGVIFI) form a helical membrane-spanning segment. Over 235–261 (QQAVRKIAIQYAKGTGRSPAGGGQSTH) the chain is Cytoplasmic. A helical membrane pass occupies residues 262–282 (LPLKVNPAGVIPVIFAVAFLI). Residues 283 to 308 (TPRTIASFFGTNDVTKWIQNNFDNTH) lie on the Extracellular side of the membrane. A helical membrane pass occupies residues 309-329 (PVGMAIYVALIIAFTYFYAFV). The Cytoplasmic segment spans residues 330-368 (QVNPEQMADNLKKQGGYIPGVRPGKMTQDRITSILYRLT). Helical transmembrane passes span 369–389 (FVGS…IQFA) and 390–410 (GLPQ…GVAL). The Cytoplasmic segment spans residues 411–431 (ETMKQLESQLVKRNYRGFMKN).

This sequence belongs to the SecY/SEC61-alpha family. In terms of assembly, component of the Sec protein translocase complex. Heterotrimer consisting of SecY, SecE and SecG subunits. The heterotrimers can form oligomers, although 1 heterotrimer is thought to be able to translocate proteins. Interacts with the ribosome. Interacts with SecDF, and other proteins may be involved. Interacts with SecA. Interacts with FloT.

The protein resides in the cell membrane. It is found in the membrane raft. Its function is as follows. The central subunit of the protein translocation channel SecYEG. Consists of two halves formed by TMs 1-5 and 6-10. These two domains form a lateral gate at the front which open onto the bilayer between TMs 2 and 7, and are clamped together by SecE at the back. The channel is closed by both a pore ring composed of hydrophobic SecY resides and a short helix (helix 2A) on the extracellular side of the membrane which forms a plug. The plug probably moves laterally to allow the channel to open. The ring and the pore may move independently. The chain is Protein translocase subunit SecY from Bacillus subtilis (strain 168).